We begin with the raw amino-acid sequence, 555 residues long: CTP synthase (555 aa).

An amidoligase domain region spans residues 1-272; that stretch reads MQPTSTTTKH…DAYVVRKLDL (272 aa). S19 provides a ligand contact to CTP. S19 provides a ligand contact to UTP. ATP is bound by residues 20-25 and D77; that span reads SLGKGL. Residues D77 and E146 each coordinate Mg(2+). CTP is bound by residues 153–155, 193–198, and K229; these read DIE and KTKPTQ. UTP is bound by residues 193-198 and K229; that span reads KTKPTQ. One can recognise a Glutamine amidotransferase type-1 domain in the interval 297 to 548; that stretch reads TVALVGKYID…VKAAVARQVA (252 aa). Position 360 (G360) interacts with L-glutamine. Catalysis depends on C387, which acts as the Nucleophile; for glutamine hydrolysis. L-glutamine-binding positions include 388 to 391, E411, and R473; that span reads LGLQ. Catalysis depends on residues H521 and E523.

This sequence belongs to the CTP synthase family. In terms of assembly, homotetramer.

It carries out the reaction UTP + L-glutamine + ATP + H2O = CTP + L-glutamate + ADP + phosphate + 2 H(+). It catalyses the reaction L-glutamine + H2O = L-glutamate + NH4(+). The catalysed reaction is UTP + NH4(+) + ATP = CTP + ADP + phosphate + 2 H(+). It functions in the pathway pyrimidine metabolism; CTP biosynthesis via de novo pathway; CTP from UDP: step 2/2. Its activity is regulated as follows. Allosterically activated by GTP, when glutamine is the substrate; GTP has no effect on the reaction when ammonia is the substrate. The allosteric effector GTP functions by stabilizing the protein conformation that binds the tetrahedral intermediate(s) formed during glutamine hydrolysis. Inhibited by the product CTP, via allosteric rather than competitive inhibition. Functionally, catalyzes the ATP-dependent amination of UTP to CTP with either L-glutamine or ammonia as the source of nitrogen. Regulates intracellular CTP levels through interactions with the four ribonucleotide triphosphates. This chain is CTP synthase, found in Streptomyces griseus subsp. griseus (strain JCM 4626 / CBS 651.72 / NBRC 13350 / KCC S-0626 / ISP 5235).